The chain runs to 134 residues: Profilin-3 (134 aa).

Cys-13 and Cys-118 are disulfide-bonded. The short motif at 84-100 (AVIRGKKGSGGITIKKT) is the Involved in PIP2 interaction element.

Belongs to the profilin family. In terms of assembly, occurs in many kinds of cells as a complex with monomeric actin in a 1:1 ratio. Post-translationally, phosphorylated by MAP kinases.

The protein localises to the cytoplasm. It is found in the cytoskeleton. Its function is as follows. Binds to actin and affects the structure of the cytoskeleton. At high concentrations, profilin prevents the polymerization of actin, whereas it enhances it at low concentrations. The chain is Profilin-3 from Olea europaea (Common olive).